Here is an 801-residue protein sequence, read N- to C-terminus: Mitochondrial intermediate peptidase (801 aa).

The N-terminal 41 residues, 1–41, are a transit peptide targeting the mitochondrion; the sequence is MKDQLLVPLRRRPWTCQKCLQRLQLPRHQTRRSFETAASPF. Residue His564 coordinates Zn(2+). Residue Glu565 is part of the active site. The Zn(2+) site is built by His568 and His571.

The protein belongs to the peptidase M3 family. Requires Zn(2+) as cofactor.

The protein localises to the mitochondrion matrix. The enzyme catalyses Release of an N-terminal octapeptide as second stage of processing of some proteins imported into the mitochondrion.. Functionally, cleaves proteins, imported into the mitochondrion, to their mature size. While most mitochondrial precursor proteins are processed to the mature form in one step by mitochondrial processing peptidase (MPP), the sequential cleavage by MIP of an octapeptide after initial processing by MPP is a required step for a subgroup of nuclear-encoded precursor proteins destined for the matrix or the inner membrane. This Aspergillus fumigatus (strain CBS 144.89 / FGSC A1163 / CEA10) (Neosartorya fumigata) protein is Mitochondrial intermediate peptidase (oct1).